A 71-amino-acid polypeptide reads, in one-letter code: ATP synthase subunit c (71 aa).

2 consecutive transmembrane segments (helical) span residues 5-25 (GAAIVAGLAAVGGAIAVAIIV) and 47-67 (FIGVPLAEAVPIIAIVMGFLI).

It belongs to the ATPase C chain family. In terms of assembly, F-type ATPases have 2 components, F(1) - the catalytic core - and F(0) - the membrane proton channel. F(1) has five subunits: alpha(3), beta(3), gamma(1), delta(1), epsilon(1). F(0) has three main subunits: a(1), b(2) and c(10-14). The alpha and beta chains form an alternating ring which encloses part of the gamma chain. F(1) is attached to F(0) by a central stalk formed by the gamma and epsilon chains, while a peripheral stalk is formed by the delta and b chains.

The protein resides in the cell membrane. F(1)F(0) ATP synthase produces ATP from ADP in the presence of a proton or sodium gradient. F-type ATPases consist of two structural domains, F(1) containing the extramembraneous catalytic core and F(0) containing the membrane proton channel, linked together by a central stalk and a peripheral stalk. During catalysis, ATP synthesis in the catalytic domain of F(1) is coupled via a rotary mechanism of the central stalk subunits to proton translocation. Its function is as follows. Key component of the F(0) channel; it plays a direct role in translocation across the membrane. A homomeric c-ring of between 10-14 subunits forms the central stalk rotor element with the F(1) delta and epsilon subunits. In Alkalihalobacillus alcalophilus (Bacillus alcalophilus), this protein is ATP synthase subunit c.